The following is a 557-amino-acid chain: Formate--tetrahydrofolate ligase (557 aa).

T66–S73 contacts ATP.

It belongs to the formate--tetrahydrofolate ligase family.

The enzyme catalyses (6S)-5,6,7,8-tetrahydrofolate + formate + ATP = (6R)-10-formyltetrahydrofolate + ADP + phosphate. Its pathway is one-carbon metabolism; tetrahydrofolate interconversion. This is Formate--tetrahydrofolate ligase from Clostridium botulinum (strain Okra / Type B1).